A 152-amino-acid polypeptide reads, in one-letter code: CASP-like protein 5B1 (152 aa).

The Cytoplasmic portion of the chain corresponds to 1 to 11; it reads MKKMIGSPGTM. Residues 12 to 32 traverse the membrane as a helical segment; sequence SGLILRLGQCATAAASIGVMV. Topologically, residues 33-42 are extracellular; the sequence is SSYDFSNYTA. N-linked (GlcNAc...) asparagine glycosylation is present at asparagine 39. Residues 43-63 traverse the membrane as a helical segment; sequence FCFLVASMGLQLIWSFGLACL. The Cytoplasmic portion of the chain corresponds to 64–77; it reads DVYAIRRKSDLRSP. A helical transmembrane segment spans residues 78 to 98; it reads ILLSLFTVGDWVTALLALAAA. Topologically, residues 99–131 are extracellular; it reads CSSAGVTVLFTKDTEFCRQQPALSCDRFQISVG. Residues 132 to 152 form a helical membrane-spanning segment; it reads LSFFNWFLAAISSHTMFWILI.

It belongs to the Casparian strip membrane proteins (CASP) family. Homodimer and heterodimers. In terms of tissue distribution, expressed in leaves, exclusively in hair cells (e.g. differentiated trichomes and immature cells).

The protein resides in the cell membrane. In Arabidopsis thaliana (Mouse-ear cress), this protein is CASP-like protein 5B1.